We begin with the raw amino-acid sequence, 963 residues long: Phosphoenolpyruvate carboxylase (963 aa).

Ser-11 is modified (phosphoserine). Catalysis depends on residues His-172 and Lys-600.

Belongs to the PEPCase type 1 family. As to quaternary structure, homotetramer. Mg(2+) serves as cofactor.

It is found in the cytoplasm. It carries out the reaction oxaloacetate + phosphate = phosphoenolpyruvate + hydrogencarbonate. Its activity is regulated as follows. By light-reversible phosphorylation. Functionally, through the carboxylation of phosphoenolpyruvate (PEP) it forms oxaloacetate, a four-carbon dicarboxylic acid source for the tricarboxylic acid cycle. In Picea abies (Norway spruce), this protein is Phosphoenolpyruvate carboxylase (PPC).